Consider the following 306-residue polypeptide: D-alanine--D-alanine ligase (306 aa).

The ATP-grasp domain occupies 107–300; it reads KEAYRAAGLP…FGQLCAWMVE (194 aa). 134–184 contacts ATP; it reads MQPPYVVKPYNEGSSVGVYIVTEAANGPPVLAPDLPATLMVEEYVPGRELS. Residues aspartate 251, glutamate 267, and asparagine 269 each coordinate Mg(2+).

The protein belongs to the D-alanine--D-alanine ligase family. Mg(2+) is required as a cofactor. Mn(2+) serves as cofactor.

The protein resides in the cytoplasm. It catalyses the reaction 2 D-alanine + ATP = D-alanyl-D-alanine + ADP + phosphate + H(+). Its pathway is cell wall biogenesis; peptidoglycan biosynthesis. Cell wall formation. The sequence is that of D-alanine--D-alanine ligase from Ruegeria pomeroyi (strain ATCC 700808 / DSM 15171 / DSS-3) (Silicibacter pomeroyi).